The following is a 959-amino-acid chain: Glycine dehydrogenase (decarboxylating) (959 aa).

N6-(pyridoxal phosphate)lysine is present on K707.

This sequence belongs to the GcvP family. The glycine cleavage system is composed of four proteins: P, T, L and H. It depends on pyridoxal 5'-phosphate as a cofactor.

The enzyme catalyses N(6)-[(R)-lipoyl]-L-lysyl-[glycine-cleavage complex H protein] + glycine + H(+) = N(6)-[(R)-S(8)-aminomethyldihydrolipoyl]-L-lysyl-[glycine-cleavage complex H protein] + CO2. In terms of biological role, the glycine cleavage system catalyzes the degradation of glycine. The P protein binds the alpha-amino group of glycine through its pyridoxal phosphate cofactor; CO(2) is released and the remaining methylamine moiety is then transferred to the lipoamide cofactor of the H protein. This chain is Glycine dehydrogenase (decarboxylating), found in Photobacterium profundum (strain SS9).